The sequence spans 1805 residues: Probable serine/threonine-protein kinase MEC1 homolog (1805 aa).

The tract at residues 406 to 425 (STEENTKNEGGSGAVENPGR) is disordered. Positions 928-1420 (QILRISFFLK…FWRSLIMMNS (493 aa)) constitute an FAT domain. One can recognise a PI3K/PI4K catalytic domain in the interval 1494–1793 (VRNEVKVFNS…LNEEATNDEN (300 aa)). The interval 1500-1506 (VFNSLQR) is G-loop. Residues 1660 to 1668 (GLGDRHAEN) are catalytic loop. Residues 1680–1704 (HVDLNCIFGKGKELQVPERVPYRLT) form an activation loop region. The region spanning 1773-1805 (DDLDACSKCDVLNEEATNDENLCMMYIGWLPFI) is the FATC domain.

Belongs to the PI3/PI4-kinase family. ATM subfamily.

Its subcellular location is the nucleus. It catalyses the reaction L-seryl-[protein] + ATP = O-phospho-L-seryl-[protein] + ADP + H(+). The enzyme catalyses L-threonyl-[protein] + ATP = O-phospho-L-threonyl-[protein] + ADP + H(+). Its function is as follows. Serine/threonine protein kinase which activates checkpoint signaling upon genotoxic stresses such as ionizing radiation (IR), ultraviolet light (UV), or DNA replication stalling, thereby acting as a DNA damage sensor. Recognizes the substrate consensus sequence [ST]-Q. Recruited to DNA lesions in order to initiate the DNA repair by homologous recombination. Phosphorylates histone H2A to form H2AS128ph (gamma-H2A) at sites of DNA damage, also involved in the regulation of DNA damage response mechanism. Required for cell growth and meiotic recombination. In Encephalitozoon cuniculi (strain GB-M1) (Microsporidian parasite), this protein is Probable serine/threonine-protein kinase MEC1 homolog (MEC1).